The primary structure comprises 575 residues: MALNLSHQLGVLAGTPIKSGEMTDSSLLSISPPSARMMTPKAMNRNYKAHGTDPSPPMSPILGATRADLSVACKAFAVENGIGTIEEQRTYREGGIGGKKEGGGGVPVFVMMPLDSVTMGNTVNRRKAMKASLQALKSAGVEGIMIDVWWGLVEKESPGTYNWGGYNELLELAKKLGLKVQAVMSFHQCGGNVGDSVTIPLPQWVVEEVDKDPDLAYTDQWGRRNHEYISLGADTLPVLKGRTPVQCYADFMRAFRDNFKHLLGETIVEIQVGMGPAGELRYPSYPEQEGTWKFPGIGAFQCYDKYSLSSLKAAAETYGKPEWGSTGPTDAGHYNNWPEDTQFFKKEGGGWNSEYGDFFLSWYSQMLLDHGERILSSAKSIFENMGVKISVKIAGIHWHYGTRSHAPELTAGYYNTRFRDGYLPIAQMLARHNAIFNFTCIEMRDHEQPQDALCAPEKLVNQVALATLAAEVPLAGENALPRYDDYAHEQILKASALNLDQNNEGEPREMCAFTYLRMNPELFQADNWGKFVAFVKKMGEGRDSHRCREEVEREAEHFVHVTQPLVQEAAVALTH.

The N-terminal 41 residues, 1–41 (MALNLSHQLGVLAGTPIKSGEMTDSSLLSISPPSARMMTPK), are a transit peptide targeting the chloroplast. 2 positions are modified to phosphoserine: S55 and S59. C73 and C511 are joined by a disulfide. Residues D147, H187, and D195 each contribute to the substrate site. E279 functions as the Proton donor in the catalytic mechanism. 3 residues coordinate substrate: K392, H397, and T439. E477 acts as the Proton acceptor in catalysis. Residues 478–479 (NA) and R517 contribute to the substrate site.

It belongs to the glycosyl hydrolase 14 family. In terms of tissue distribution, expressed in leaves, roots, flowers, pollen, and seeds.

It is found in the plastid. The protein resides in the chloroplast. It catalyses the reaction Hydrolysis of (1-&gt;4)-alpha-D-glucosidic linkages in polysaccharides so as to remove successive maltose units from the non-reducing ends of the chains.. Its activity is regulated as follows. Redox regulation; active in reducing conditions, inactive in oxidizing conditions. Thioredoxins f1, m1, and y1 mediate the reversible reductive activation of oxidized BAM1. Beta-amylase activity. Can use p-nitrophenyl maltopentaoside (PNPG5) as substrate only in reduced form. Can play a minor role in the starch degradation and maltose metabolism in chloroplasts during the night. More active on phosphorylated glucan. Interacts directly with starch or other alpha-1,4-glucan. This chain is Beta-amylase 1, chloroplastic (BAM1), found in Arabidopsis thaliana (Mouse-ear cress).